The following is an 89-amino-acid chain: Insulin (89 aa).

3 disulfide bridges follow: Cys-7-Cys-75, Cys-19-Cys-88, and Cys-74-Cys-79. Positions 33-66 are cleaved as a propeptide — c peptide; sequence DVGPLSAFRDLEPPLDTEMEDRFPYRQQLAGSKM.

Belongs to the insulin family. Heterodimer of a B chain and an A chain linked by two disulfide bonds.

The protein resides in the secreted. Insulin decreases blood glucose concentration. It increases cell permeability to monosaccharides, amino acids and fatty acids. It accelerates glycolysis, the pentose phosphate cycle, and glycogen synthesis in liver. This chain is Insulin (ins), found in Callorhinchus milii (Ghost shark).